We begin with the raw amino-acid sequence, 47 residues long: Defensin NsD7 (47 aa).

Cystine bridges form between cysteine 3–cysteine 47, cysteine 14–cysteine 34, cysteine 20–cysteine 41, and cysteine 24–cysteine 43. Residues lysine 4, histidine 33, lysine 36, and arginine 39 each coordinate a 1,2-diacyl-sn-glycero-3-phosphate.

The protein belongs to the DEFL family. In the presence of phosphatidic acid (PA), forms right-handed double helices which tend to bundle into fibrils. Each helix is a repetition of dimers containing 2 bound molecules of PA per dimer. Dimers are arranged orthogonally in a tip-to-tip configuration with 1 molecule of PA located at the dimer contact interface. Association of 2 helices to form a double helix depends on intercalating isoleucine residues Ile-15 and Ile-37. Bundling of double helices into fibrils depends on Arg-26.

The protein resides in the vacuole. In terms of biological role, plant defense peptide. Disrupts membranes containing phosphatidic acid (PA) via a PA-dependent oligomerization process. The chain is Defensin NsD7 from Nicotiana suaveolens (Australian tobacco).